Reading from the N-terminus, the 408-residue chain is Probable pectate lyase 18 (408 aa).

Residues 1–24 (MKMQTKKLFITIVSFLLYAPLFLS) form the signal peptide. An N-linked (GlcNAc...) asparagine glycan is attached at N42. The Ca(2+) site is built by D206, D230, and D234. The active site involves R286.

This sequence belongs to the polysaccharide lyase 1 family. It depends on Ca(2+) as a cofactor. In terms of tissue distribution, expressed in flowers, but not in leaves.

The catalysed reaction is Eliminative cleavage of (1-&gt;4)-alpha-D-galacturonan to give oligosaccharides with 4-deoxy-alpha-D-galact-4-enuronosyl groups at their non-reducing ends.. The protein operates within glycan metabolism; pectin degradation; 2-dehydro-3-deoxy-D-gluconate from pectin: step 2/5. The protein is Probable pectate lyase 18 of Arabidopsis thaliana (Mouse-ear cress).